The following is a 188-amino-acid chain: FMN-dependent NADPH-azoreductase (188 aa).

This sequence belongs to the azoreductase type 2 family. Homotetramer. It depends on FMN as a cofactor.

Catalyzes the reductive cleavage of azo bond in aromatic azo compounds to the corresponding amines. Requires NADPH, but not NADH, as an electron donor for its activity. The protein is FMN-dependent NADPH-azoreductase (azo1) of Staphylococcus haemolyticus (strain JCSC1435).